The primary structure comprises 351 residues: 5-deoxyribose 1-phosphate isomerase (351 aa).

Substrate contacts are provided by residues 48-50, Arg91, and Gln198; that span reads RGA. Asp239 acts as the Proton donor in catalysis. 249 to 250 lines the substrate pocket; that stretch reads NK.

It belongs to the EIF-2B alpha/beta/delta subunits family. DrdI subfamily.

The catalysed reaction is 5-deoxy-alpha-D-ribose 1-phosphate = 5-deoxy-D-ribulose 1-phosphate. Its pathway is carbohydrate degradation. In terms of biological role, catalyzes the isomerization of 5-deoxy-alpha-D-ribose 1-phosphate to 5-deoxy-D-ribulose 1-phosphate, as part of a 5-deoxyribose salvage pathway that recycles this toxic radical SAM enzyme by-product to mainstream metabolites. The polypeptide is 5-deoxyribose 1-phosphate isomerase (Moorella thermoacetica (strain ATCC 39073 / JCM 9320)).